A 247-amino-acid chain; its full sequence is Ribonuclease PH (247 aa).

Residues arginine 90 and 128 to 130 contribute to the phosphate site; that span reads GTR.

It belongs to the RNase PH family. Homohexameric ring arranged as a trimer of dimers.

It catalyses the reaction tRNA(n+1) + phosphate = tRNA(n) + a ribonucleoside 5'-diphosphate. Its function is as follows. Phosphorolytic 3'-5' exoribonuclease that plays an important role in tRNA 3'-end maturation. Removes nucleotide residues following the 3'-CCA terminus of tRNAs; can also add nucleotides to the ends of RNA molecules by using nucleoside diphosphates as substrates, but this may not be physiologically important. Probably plays a role in initiation of 16S rRNA degradation (leading to ribosome degradation) during starvation. The sequence is that of Ribonuclease PH from Synechococcus sp. (strain CC9605).